We begin with the raw amino-acid sequence, 297 residues long: Acetyl-coenzyme A carboxylase carboxyl transferase subunit beta (297 aa).

The interval 1 to 23 is disordered; the sequence is MSWIERILGRTSSSSSSSKSKVP. The CoA carboxyltransferase N-terminal domain maps to 26 to 295; that stretch reads VWTKCTSCEQ…PFKTAELIVE (270 aa). Positions 30, 33, 49, and 52 each coordinate Zn(2+). Residues 30-52 form a C4-type zinc finger; the sequence is CTSCEQVLYSEELKRNMHVCPKC.

This sequence belongs to the AccD/PCCB family. In terms of assembly, acetyl-CoA carboxylase is a heterohexamer composed of biotin carboxyl carrier protein (AccB), biotin carboxylase (AccC) and two subunits each of ACCase subunit alpha (AccA) and ACCase subunit beta (AccD). Zn(2+) serves as cofactor.

The protein localises to the cytoplasm. It catalyses the reaction N(6)-carboxybiotinyl-L-lysyl-[protein] + acetyl-CoA = N(6)-biotinyl-L-lysyl-[protein] + malonyl-CoA. It functions in the pathway lipid metabolism; malonyl-CoA biosynthesis; malonyl-CoA from acetyl-CoA: step 1/1. Functionally, component of the acetyl coenzyme A carboxylase (ACC) complex. Biotin carboxylase (BC) catalyzes the carboxylation of biotin on its carrier protein (BCCP) and then the CO(2) group is transferred by the transcarboxylase to acetyl-CoA to form malonyl-CoA. In Actinobacillus pleuropneumoniae serotype 7 (strain AP76), this protein is Acetyl-coenzyme A carboxylase carboxyl transferase subunit beta.